Here is a 185-residue protein sequence, read N- to C-terminus: Ribosome-recycling factor (185 aa).

This sequence belongs to the RRF family.

It is found in the cytoplasm. Responsible for the release of ribosomes from messenger RNA at the termination of protein biosynthesis. May increase the efficiency of translation by recycling ribosomes from one round of translation to another. This chain is Ribosome-recycling factor, found in Shewanella woodyi (strain ATCC 51908 / MS32).